Consider the following 400-residue polypeptide: tRNA (guanine-N(7)-)-methyltransferase (400 aa).

S-adenosyl-L-methionine-binding residues include Glu-124, Glu-149, and Asp-176. Asp-232 is a binding site for substrate.

Belongs to the class I-like SAM-binding methyltransferase superfamily. TrmB family.

The enzyme catalyses guanosine(46) in tRNA + S-adenosyl-L-methionine = N(7)-methylguanosine(46) in tRNA + S-adenosyl-L-homocysteine. Its pathway is tRNA modification; N(7)-methylguanine-tRNA biosynthesis. In terms of biological role, catalyzes the formation of N(7)-methylguanine at position 46 (m7G46) in tRNA. This is tRNA (guanine-N(7)-)-methyltransferase from Helicobacter pylori (strain J99 / ATCC 700824) (Campylobacter pylori J99).